The chain runs to 90 residues: Elongation factor 1-beta (90 aa).

The protein belongs to the EF-1-beta/EF-1-delta family.

Functionally, promotes the exchange of GDP for GTP in EF-1-alpha/GDP, thus allowing the regeneration of EF-1-alpha/GTP that could then be used to form the ternary complex EF-1-alpha/GTP/AAtRNA. This Aeropyrum pernix (strain ATCC 700893 / DSM 11879 / JCM 9820 / NBRC 100138 / K1) protein is Elongation factor 1-beta (ef1b).